The primary structure comprises 312 residues: Serine/threonine-protein phosphatase CPPED1 (312 aa).

Phosphoserine is present on serine 2. Residues 47–250 (KAWSTGNCDA…AVFSGHYHRN (204 aa)) form a catalytic region. A divalent metal cation is bound by residues aspartate 90, asparagine 127, and histidine 246. Serine 293 carries the post-translational modification Phosphoserine.

The protein belongs to the metallophosphoesterase superfamily. CPPED1 family. The cofactor is a divalent metal cation.

It localises to the cytoplasm. The catalysed reaction is O-phospho-L-seryl-[protein] + H2O = L-seryl-[protein] + phosphate. The enzyme catalyses O-phospho-L-threonyl-[protein] + H2O = L-threonyl-[protein] + phosphate. Protein phosphatase that dephosphorylates AKT family kinase specifically at 'Ser-473', blocking cell cycle progression and promoting cell apoptosis. May play an inhibitory role in glucose uptake by adipocytes. In Mus musculus (Mouse), this protein is Serine/threonine-protein phosphatase CPPED1 (Cpped1).